The chain runs to 135 residues: Fluoride-specific ion channel FluC 2 (135 aa).

4 consecutive transmembrane segments (helical) span residues 5-25 (VLAA…GLLA), 36-56 (WGTV…METL), 68-88 (PFLG…ITDA), and 100-120 (ALLA…AAAG). G76 and T79 together coordinate Na(+).

It belongs to the fluoride channel Fluc/FEX (TC 1.A.43) family.

The protein localises to the cell membrane. It catalyses the reaction fluoride(in) = fluoride(out). Its activity is regulated as follows. Na(+) is not transported, but it plays an essential structural role and its presence is essential for fluoride channel function. In terms of biological role, fluoride-specific ion channel. Important for reducing fluoride concentration in the cell, thus reducing its toxicity. In Thermobifida fusca (strain YX), this protein is Fluoride-specific ion channel FluC 2.